Reading from the N-terminus, the 464-residue chain is Glutamate--tRNA ligase (464 aa).

Positions 9–19 match the 'HIGH' region motif; sequence PSPTGYLHIGG. The 'KMSKS' region motif lies at 242–246; sequence KISKR. Lys245 is a binding site for ATP.

Belongs to the class-I aminoacyl-tRNA synthetase family. Glutamate--tRNA ligase type 1 subfamily. Monomer.

Its subcellular location is the cytoplasm. The catalysed reaction is tRNA(Glu) + L-glutamate + ATP = L-glutamyl-tRNA(Glu) + AMP + diphosphate. Its function is as follows. Catalyzes the attachment of glutamate to tRNA(Glu) in a two-step reaction: glutamate is first activated by ATP to form Glu-AMP and then transferred to the acceptor end of tRNA(Glu). This chain is Glutamate--tRNA ligase, found in Neisseria meningitidis serogroup C (strain 053442).